The following is a 440-amino-acid chain: Gap junction gamma-2 protein (440 aa).

Residues 1–21 (MTNMSWSFLTRLLEEIHNHST) are Cytoplasmic-facing. Residues 22–42 (FVGKVWLTVLVVFRIVLTAVG) form a helical membrane-spanning segment. Over 43 to 78 (GESIYSDEQSKFTCNTRQPGCDNVCYDAFAPLSHVR) the chain is Extracellular. Residues 79–99 (FWVFQIVVISTPSVMYLGYAV) form a helical membrane-spanning segment. Residues 100–223 (HRLARASEQE…AQLVVRAAFE (124 aa)) are Cytoplasmic-facing. Positions 108–199 (QERRRALRRR…TPGPAGQHDG (92 aa)) are disordered. A compositionally biased stretch (basic residues) spans 112–124 (RALRRRPGTRRLP). A compositionally biased stretch (low complexity) spans 136–149 (PDTTDLGEAEPILA). The span at 150 to 173 (LEEDEDEEPGAPEGPGEDTEEERA) shows a compositional bias: acidic residues. A helical transmembrane segment spans residues 224-244 (VAFLVGQYLLYGFEVPPFFAC). At 245–264 (SRQPCPHVVDCFVSRPTEKT) the chain is on the extracellular side. Residues 265–285 (VFLLVMYVVSCLCLLLNLCEM) traverse the membrane as a helical segment. The Cytoplasmic portion of the chain corresponds to 286–440 (AHLGLGSAQD…SRDGKATVWI (155 aa)). A disordered region spans residues 369–440 (DRDSPPCAGL…SRDGKATVWI (72 aa)). S372 bears the Phosphoserine mark. Residues 388–401 (VGGLASGTGSATSG) show a composition bias toward low complexity.

This sequence belongs to the connexin family. Gamma-type subfamily. In terms of assembly, a connexon is composed of a hexamer of connexins. Interacts with TJP1. As to expression, mainly expressed by oligodendrocytes in the central nervous system (at protein level).

The protein localises to the cell membrane. The protein resides in the cell junction. It is found in the gap junction. Its function is as follows. One gap junction consists of a cluster of closely packed pairs of transmembrane channels, the connexons, through which materials of low MW diffuse from one cell to a neighboring cell. May play a role in myelination in central and peripheral nervous systems. The polypeptide is Gap junction gamma-2 protein (Gjc2) (Mus musculus (Mouse)).